A 1894-amino-acid polypeptide reads, in one-letter code: Plexin-A2 (1894 aa).

Positions Met1–Gly34 are cleaved as a signal peptide. The Sema domain occupies Met35–Val508. Over Met35 to Pro1237 the chain is Extracellular. N-linked (GlcNAc...) asparagine glycosylation is found at Asn76 and Asn91. Cystine bridges form between Cys94–Cys103, Cys129–Cys137, Cys284–Cys405, Cys300–Cys356, Cys374–Cys393, Cys511–Cys528, Cys517–Cys559, Cys520–Cys537, Cys531–Cys543, and Cys594–Cys613. An N-linked (GlcNAc...) asparagine glycan is attached at Asn327. Asn598, Asn696, and Asn756 each carry an N-linked (GlcNAc...) asparagine glycan. IPT/TIG domains follow at residues Pro858 to Phe951, Pro954 to Tyr1037, Pro1041 to Tyr1139, and Pro1143 to Val1228. N-linked (GlcNAc...) asparagine glycosylation occurs at Asn1205. A helical transmembrane segment spans residues Ala1238 to Ile1258. The Cytoplasmic portion of the chain corresponds to Ala1259–Ser1894. Positions Lys1261–Ser1310 form a coiled coil. Ser1612 carries the post-translational modification Phosphoserine.

It belongs to the plexin family. In terms of assembly, homodimer. The PLXNA2 homodimer interacts with a SEMA6A homodimer, giving rise to a heterotetramer. Interacts directly with NRP1 and NRP2. Interacts with RND1. In terms of tissue distribution, detected in fetal brain.

The protein resides in the cell membrane. In terms of biological role, coreceptor for SEMA3A and SEMA6A. Necessary for signaling by SEMA6A and class 3 semaphorins and subsequent remodeling of the cytoskeleton. Plays a role in axon guidance, invasive growth and cell migration. Class 3 semaphorins bind to a complex composed of a neuropilin and a plexin. The plexin modulates the affinity of the complex for specific semaphorins, and its cytoplasmic domain is required for the activation of down-stream signaling events in the cytoplasm. The protein is Plexin-A2 (PLXNA2) of Homo sapiens (Human).